Consider the following 535-residue polypeptide: Dimethylaniline monooxygenase [N-oxide-forming] 2 (535 aa).

An N-acetylalanine modification is found at Ala2. FAD is bound by residues 9-13, Glu32, 40-41, and 61-62; these read GAGVS, VW, and NT. NADP(+) is bound by residues 60 to 61 and 195 to 198; these read TN and SGSD. Residue Lys492 forms a Glycyl lysine isopeptide (Lys-Gly) (interchain with G-Cter in SUMO) linkage. The chain crosses the membrane as a helical span at residues 510-530; the sequence is FPVSFLLKILGLVAVVVAFFC.

Belongs to the FMO family. Requires FAD as cofactor. Mg(2+) is required as a cofactor.

It is found in the microsome membrane. It localises to the endoplasmic reticulum membrane. It catalyses the reaction N,N-dimethylaniline + NADPH + O2 + H(+) = N,N-dimethylaniline N-oxide + NADP(+) + H2O. Functionally, catalyzes the oxidative metabolism of numerous xenobiotics, including mainly therapeutic drugs and insecticides that contain a soft nucleophile, most commonly nitrogen and sulfur and participates to their bioactivation. This chain is Dimethylaniline monooxygenase [N-oxide-forming] 2, found in Macaca mulatta (Rhesus macaque).